A 722-amino-acid chain; its full sequence is uncharacterized protein (722 aa).

Catalysis depends on charge relay system residues S575, D658, and H691.

This sequence belongs to the peptidase S9B family.

This is an uncharacterized protein from Rickettsia prowazekii (strain Madrid E).